The following is a 198-amino-acid chain: Dual specificity protein phosphatase 14 (198 aa).

The Tyrosine-protein phosphatase domain maps to 26-167; sequence GIAQITSSLF…LIDYESQLFG (142 aa). Catalysis depends on C111, which acts as the Phosphocysteine intermediate.

This sequence belongs to the protein-tyrosine phosphatase family. Non-receptor class dual specificity subfamily.

It catalyses the reaction O-phospho-L-tyrosyl-[protein] + H2O = L-tyrosyl-[protein] + phosphate. The catalysed reaction is O-phospho-L-seryl-[protein] + H2O = L-seryl-[protein] + phosphate. The enzyme catalyses O-phospho-L-threonyl-[protein] + H2O = L-threonyl-[protein] + phosphate. In terms of biological role, involved in the inactivation of MAP kinases. Dephosphorylates ERK, JNK and p38 MAP-kinases. Plays a negative role in TCR signaling by dephosphorylating MAP3K7 adapter TAB1 leading to its inactivation. The chain is Dual specificity protein phosphatase 14 (Dusp14) from Mus musculus (Mouse).